The sequence spans 523 residues: Volkensin (523 aa).

Catalysis depends on residues tyrosine 74, tyrosine 113, glutamate 162, and arginine 165. Glycine 111–tyrosine 113 contributes to the AMP binding site. 2 disulfide bridges follow: cysteine 245–cysteine 269 and cysteine 285–cysteine 304. A propeptide spans glutamine 251–asparagine 265 (linker peptide). Positions proline 270–threonine 397 constitute a Ricin B-type lectin 1 domain. Residues aspartate 287–glutamate 291, glutamine 300, lysine 305, and asparagine 311 each bind a carbohydrate. A disulfide bridge links cysteine 328 with cysteine 343. A carbohydrate is bound by residues asparagine 358 and asparagine 398. Asparagine 358 and asparagine 398 each carry an N-linked (GlcNAc...) asparagine glycan. The Ricin B-type lectin 2 domain maps to threonine 400–leucine 523. 2 disulfide bridges follow: cysteine 414-cysteine 427 and cysteine 453-cysteine 471.

It in the N-terminal section; belongs to the ribosome-inactivating protein family. Type 2 RIP subfamily. Disulfide-linked dimer of A and B chains. N-glycosylated. Contains mannose and galactose. In terms of tissue distribution, expressed in roots (at protein level). Expressed in seeds (at protein level).

It catalyses the reaction Endohydrolysis of the N-glycosidic bond at one specific adenosine on the 28S rRNA.. Its activity is regulated as follows. Hemagglutinating activity is inhibited by galactose and structurally related sugars. Functionally, has N-glycosidase activity and is responsible for inhibiting protein synthesis through the catalytic inactivation of 60S ribosomal subunits by removing a specific adenine of 28S rRNA. Inhibits GTP-dependent binding of EF2 (elongation factor 2) to ribosomes. Binds to cell receptors and probably facilitates the entry into the cell of the A chain. Also acts as a galactose-specific lectin responsible for cell agglutination. The protein is Volkensin of Adenia volkensii (Kilyambiti plant).